A 481-amino-acid chain; its full sequence is MTPALTALLCLGLSLGPRTRVQAGPFPKPTLWAEPGSVISWGSPVTIWCQGSLEAQEYQLDKEGSPEPLDRNNPLEPKNKARFSIPSMTQHHAGRYRCHYYSSAGWSEPSDPLELVMTGFYNKPTLSALPSPVVASGGNMTLRCGSQKGYHHFVLMKEGEHQLPRTLDSQQLHSGGFQALFPVGPVTPSHRWRFTCYYYYTNTPRVWSHPSDPLEILPSGVSRKPSLLTLQGPVLAPGQSLTLQCGSDVGYDRFVLYKEGERDFLQRPGQQPQAGLSQANFTLGPVSPSHGGQYRCYGAHNLSSEWSAPSDPLNILMAGQIYDTVSLSAQPGPTVASGENVTLLCQSRGYFDTFLLTKEGAAHPPLRLRSMYGAHKYQAEFPMSPVTSAHAGTYRCYGSYSSNPHLLSFPSEPLELMVSGHSGGSSLPPTGPPSTPASHAKDYTVENLIRMGMAGLVLVFLGILLFEAQHSQRNPQDAAGR.

The signal sequence occupies residues 1 to 23 (MTPALTALLCLGLSLGPRTRVQA). At 24-447 (GPFPKPTLWA…SHAKDYTVEN (424 aa)) the chain is on the extracellular side. An intrachain disulfide couples C49 to C98. The segment covering 59-70 (QLDKEGSPEPLD) has biased composition (basic and acidic residues). The segment at 59–78 (QLDKEGSPEPLDRNNPLEPK) is disordered. An N-linked (GlcNAc...) asparagine glycan is attached at N139. 2 disulfides stabilise this stretch: C144–C196 and C245–C296. 2 Ig-like C2-type domains span residues 225 to 314 (PSLL…DPLN) and 323 to 408 (DTVS…HLLS). N301 and N340 each carry an N-linked (GlcNAc...) asparagine glycan. An intrachain disulfide couples C345 to C396. The disordered stretch occupies residues 419–439 (SGHSGGSSLPPTGPPSTPASH). A helical membrane pass occupies residues 448–468 (LIRMGMAGLVLVFLGILLFEA). Residues 469–481 (QHSQRNPQDAAGR) lie on the Cytoplasmic side of the membrane.

It localises to the membrane. May act as receptor for class I MHC antigens. This Homo sapiens (Human) protein is Leukocyte immunoglobulin-like receptor subfamily A member 6 (LILRA6).